Consider the following 478-residue polypeptide: ATP synthase subunit beta (478 aa).

Position 164–171 (164–171) interacts with ATP; sequence GGAGVGKT.

It belongs to the ATPase alpha/beta chains family. As to quaternary structure, F-type ATPases have 2 components, CF(1) - the catalytic core - and CF(0) - the membrane proton channel. CF(1) has five subunits: alpha(3), beta(3), gamma(1), delta(1), epsilon(1). CF(0) has three main subunits: a(1), b(2) and c(9-12). The alpha and beta chains form an alternating ring which encloses part of the gamma chain. CF(1) is attached to CF(0) by a central stalk formed by the gamma and epsilon chains, while a peripheral stalk is formed by the delta and b chains.

Its subcellular location is the cell membrane. It carries out the reaction ATP + H2O + 4 H(+)(in) = ADP + phosphate + 5 H(+)(out). Produces ATP from ADP in the presence of a proton gradient across the membrane. The catalytic sites are hosted primarily by the beta subunits. This is ATP synthase subunit beta from Corynebacterium kroppenstedtii (strain DSM 44385 / JCM 11950 / CIP 105744 / CCUG 35717).